Reading from the N-terminus, the 178-residue chain is Ribosome maturation factor RimM (178 aa).

Positions 98 to 178 (DGEYYWNQLE…RILVDWDPEF (81 aa)) constitute a PRC barrel domain.

This sequence belongs to the RimM family. In terms of assembly, binds ribosomal protein uS19.

The protein localises to the cytoplasm. Its function is as follows. An accessory protein needed during the final step in the assembly of 30S ribosomal subunit, possibly for assembly of the head region. Essential for efficient processing of 16S rRNA. May be needed both before and after RbfA during the maturation of 16S rRNA. It has affinity for free ribosomal 30S subunits but not for 70S ribosomes. This chain is Ribosome maturation factor RimM, found in Cellvibrio japonicus (strain Ueda107) (Pseudomonas fluorescens subsp. cellulosa).